The sequence spans 420 residues: Tyrosine--tRNA ligase (420 aa).

Tyr33 contacts L-tyrosine. The 'HIGH' region signature appears at 38–47 (PTADSLHVGH). The L-tyrosine site is built by Tyr167 and Gln171. A 'KMSKS' region motif is present at residues 227–231 (KFGKT). Residue Lys230 coordinates ATP. The 67-residue stretch at 353-419 (LTVADLLVKV…GKRNYALVKV (67 aa)) folds into the S4 RNA-binding domain.

The protein belongs to the class-I aminoacyl-tRNA synthetase family. TyrS type 1 subfamily. Homodimer.

The protein resides in the cytoplasm. The enzyme catalyses tRNA(Tyr) + L-tyrosine + ATP = L-tyrosyl-tRNA(Tyr) + AMP + diphosphate + H(+). Catalyzes the attachment of tyrosine to tRNA(Tyr) in a two-step reaction: tyrosine is first activated by ATP to form Tyr-AMP and then transferred to the acceptor end of tRNA(Tyr). The protein is Tyrosine--tRNA ligase of Anaeromyxobacter dehalogenans (strain 2CP-C).